Consider the following 250-residue polypeptide: NAD(P)H-quinone oxidoreductase subunit S, chloroplastic (250 aa).

Residues 1-48 (MATSSITIPTIRTPIHRSKFLGQTHQFSTVNRSVFPPPKQQSKLYQVK) constitute a chloroplast transit peptide. K52 participates in a covalent cross-link: Glycyl lysine isopeptide (Lys-Gly) (interchain with G-Cter in ubiquitin). Basic and acidic residues-rich tracts occupy residues 76 to 94 (QRNI…NETE) and 106 to 115 (VPEDGFEKEM). 2 disordered regions span residues 76–163 (QRNI…KPKA) and 222–250 (REKG…EAAP). Residues 136–146 (NPPPPPPPPPA) are compositionally biased toward pro residues.

In terms of assembly, part of the chloroplast NDH complex, composed of a mixture of chloroplast and nucleus encoded subunits. Component of the electron donor-binding subcomplex, at least composed of NDHS, NDHT and NDHU. Interacts with the NDH subcomplex A via the protein NDHT and NDHU. Post-translationally, arg-193 is the critical site for the high affinity binding of NDH to ferredoxin.

The protein localises to the plastid. It is found in the chloroplast thylakoid membrane. The catalysed reaction is a plastoquinone + NADH + (n+1) H(+)(in) = a plastoquinol + NAD(+) + n H(+)(out). It carries out the reaction a plastoquinone + NADPH + (n+1) H(+)(in) = a plastoquinol + NADP(+) + n H(+)(out). NDH shuttles electrons from NAD(P)H:plastoquinone, via FMN and iron-sulfur (Fe-S) centers, to quinones in the photosynthetic chain and possibly in a chloroplast respiratory chain. The immediate electron acceptor for the enzyme in this species is believed to be plastoquinone. Couples the redox reaction to proton translocation, and thus conserves the redox energy in a proton gradient. Required for the efficient operation of ferredoxin-dependent plastoquinone reduction. Forms the electron donor-binding subcomplex in association with the NDHT and NDHU subunits. This is NAD(P)H-quinone oxidoreductase subunit S, chloroplastic from Arabidopsis thaliana (Mouse-ear cress).